A 205-amino-acid chain; its full sequence is Dephospho-CoA kinase (205 aa).

The 201-residue stretch at 4 to 204 (VVGLTGGIAS…QYYLTLATQQ (201 aa)) folds into the DPCK domain. 12-17 (ASGKTT) contributes to the ATP binding site.

It belongs to the CoaE family.

Its subcellular location is the cytoplasm. The catalysed reaction is 3'-dephospho-CoA + ATP = ADP + CoA + H(+). It functions in the pathway cofactor biosynthesis; coenzyme A biosynthesis; CoA from (R)-pantothenate: step 5/5. Catalyzes the phosphorylation of the 3'-hydroxyl group of dephosphocoenzyme A to form coenzyme A. The protein is Dephospho-CoA kinase of Haemophilus ducreyi (strain 35000HP / ATCC 700724).